The sequence spans 467 residues: ATP synthase subunit beta (467 aa).

152-159 (GGAGVGKT) contacts ATP.

Belongs to the ATPase alpha/beta chains family. F-type ATPases have 2 components, CF(1) - the catalytic core - and CF(0) - the membrane proton channel. CF(1) has five subunits: alpha(3), beta(3), gamma(1), delta(1), epsilon(1). CF(0) has three main subunits: a(1), b(2) and c(9-12). The alpha and beta chains form an alternating ring which encloses part of the gamma chain. CF(1) is attached to CF(0) by a central stalk formed by the gamma and epsilon chains, while a peripheral stalk is formed by the delta and b chains.

Its subcellular location is the cell inner membrane. The enzyme catalyses ATP + H2O + 4 H(+)(in) = ADP + phosphate + 5 H(+)(out). Functionally, produces ATP from ADP in the presence of a proton gradient across the membrane. The catalytic sites are hosted primarily by the beta subunits. The polypeptide is ATP synthase subunit beta (Wolinella succinogenes (strain ATCC 29543 / DSM 1740 / CCUG 13145 / JCM 31913 / LMG 7466 / NCTC 11488 / FDC 602W) (Vibrio succinogenes)).